Reading from the N-terminus, the 193-residue chain is Probable chemoreceptor glutamine deamidase CheD 1 (193 aa).

Residues 1–26 (MPHTPPAYPAASADHRPPSSPPAEPA) form a disordered region.

It belongs to the CheD family.

The enzyme catalyses L-glutaminyl-[protein] + H2O = L-glutamyl-[protein] + NH4(+). Functionally, probably deamidates glutamine residues to glutamate on methyl-accepting chemotaxis receptors (MCPs), playing an important role in chemotaxis. The sequence is that of Probable chemoreceptor glutamine deamidase CheD 1 from Chromobacterium violaceum (strain ATCC 12472 / DSM 30191 / JCM 1249 / CCUG 213 / NBRC 12614 / NCIMB 9131 / NCTC 9757 / MK).